Here is a 311-residue protein sequence, read N- to C-terminus: Pyrimidine-specific ribonucleoside hydrolase RihA (311 aa).

His-240 is a catalytic residue.

Belongs to the IUNH family. RihA subfamily.

Hydrolyzes with equal efficiency cytidine or uridine to ribose and cytosine or uracil, respectively. This Escherichia coli O9:H4 (strain HS) protein is Pyrimidine-specific ribonucleoside hydrolase RihA.